Consider the following 178-residue polypeptide: Peptide methionine sulfoxide reductase MsrA (178 aa).

Residue cysteine 11 is part of the active site.

Belongs to the MsrA Met sulfoxide reductase family.

The catalysed reaction is L-methionyl-[protein] + [thioredoxin]-disulfide + H2O = L-methionyl-(S)-S-oxide-[protein] + [thioredoxin]-dithiol. It carries out the reaction [thioredoxin]-disulfide + L-methionine + H2O = L-methionine (S)-S-oxide + [thioredoxin]-dithiol. Functionally, has an important function as a repair enzyme for proteins that have been inactivated by oxidation. Catalyzes the reversible oxidation-reduction of methionine sulfoxide in proteins to methionine. The polypeptide is Peptide methionine sulfoxide reductase MsrA (Natronomonas pharaonis (strain ATCC 35678 / DSM 2160 / CIP 103997 / JCM 8858 / NBRC 14720 / NCIMB 2260 / Gabara) (Halobacterium pharaonis)).